The chain runs to 404 residues: Probable RNA polymerase sigma-C factor (404 aa).

The Polymerase core binding motif lies at 193–206; the sequence is DLIQEGTLGLERAV. A DNA-binding region (H-T-H motif) is located at residues 362–381; the sequence is LSEIGRILNLSRERVRQIEA.

The protein belongs to the sigma-70 factor family.

Sigma factors are initiation factors that promote the attachment of RNA polymerase to specific initiation sites and are then released. In Synechocystis sp. (strain ATCC 27184 / PCC 6803 / Kazusa), this protein is Probable RNA polymerase sigma-C factor (sigC).